A 403-amino-acid polypeptide reads, in one-letter code: Tyrosine--tRNA ligase (403 aa).

Residues 45-54 carry the 'HIGH' region motif; that stretch reads PTAPDLHLGH. A 'KMSKS' region motif is present at residues 229–233; the sequence is KMSKS. An ATP-binding site is contributed by Lys-232. Residues 341 to 402 enclose the S4 RNA-binding domain; it reads VALCRLLAEA…GKRRFARITF (62 aa).

This sequence belongs to the class-I aminoacyl-tRNA synthetase family. TyrS type 2 subfamily. Homodimer.

Its subcellular location is the cytoplasm. It catalyses the reaction tRNA(Tyr) + L-tyrosine + ATP = L-tyrosyl-tRNA(Tyr) + AMP + diphosphate + H(+). In terms of biological role, catalyzes the attachment of tyrosine to tRNA(Tyr) in a two-step reaction: tyrosine is first activated by ATP to form Tyr-AMP and then transferred to the acceptor end of tRNA(Tyr). This chain is Tyrosine--tRNA ligase, found in Geobacter sulfurreducens (strain ATCC 51573 / DSM 12127 / PCA).